Consider the following 880-residue polypeptide: DNA mismatch repair protein MutS (880 aa).

605-612 (GPNMSGKS) is an ATP binding site. Residues 790–829 (QETAAVPSRGVEPPAPVIEPTPAKEQTPVKEQTTPLVEES) are disordered. Over residues 818–829 (VKEQTTPLVEES) the composition is skewed to polar residues.

This sequence belongs to the DNA mismatch repair MutS family.

This protein is involved in the repair of mismatches in DNA. It is possible that it carries out the mismatch recognition step. This protein has a weak ATPase activity. This Limosilactobacillus fermentum (strain NBRC 3956 / LMG 18251) (Lactobacillus fermentum) protein is DNA mismatch repair protein MutS.